Here is a 183-residue protein sequence, read N- to C-terminus: Helofensin-2 (183 aa).

The first 26 residues, 1–26 (MQMDWLFIAVISGIGLLSSGVPGTQG), serve as a signal peptide directing secretion. The C(6)C(4)C(9)C(6)CC 1; approximate repeat unit spans residues 27 to 64 (AYTTEQCRALNGSCNFYACFPKNVIIGKCDWWGWSCCA). A C(6)C(4)C(9)C(6)CC 2; approximate repeat occupies 65–101 (RTPLERCTAKKGTCTKTGCTKTDTDHGPCDGGAQCCQ). The stretch at 102 to 139 (RDPVKYCKFHGNVCGRGKCPMDHIPIGEQCMPGYPCCK) is one C(6)C(4)C(9)C(6)CC 3; approximate repeat. One copy of the C(6)C(4)C(9)C(6)CC 4; approximate repeat lies at 140–177 (RDGPAYCKSKGGKCLRRCSQIVPTDIIGVCADGVPCCK).

This sequence belongs to the beta-defensin family. Helofensin subfamily. In terms of tissue distribution, expressed by the mandibular venom gland.

The protein resides in the secreted. In terms of biological role, lethal toxin which possesses an inhibitory effect on direct electrical stimulation of the isolated hemi-diaphragm of mice. Neither hemorrhagic nor hemolytic activities are detected. Phospholipase A2 activity, proteolytic activity and arginine esterolytic activity are absent. This chain is Helofensin-2, found in Heloderma suspectum cinctum (Banded Gila monster).